The sequence spans 552 residues: 3-hydroxy-3-methylglutaryl-coenzyme A reductase 1 (552 aa).

2 stretches are compositionally biased toward low complexity: residues 79–99 (QHNQQQQQKQQPSQDYIQQPQ) and 112–122 (QQQQQQQQQQQ). A disordered region spans residues 79–138 (QHNQQQQQKQQPSQDYIQQPQNDNNINSGKEQEQQQQQQQQQQQTPDITNQPTKTNKKIP). Over residues 123 to 132 (TPDITNQPTK) the composition is skewed to polar residues. Glu-237 acts as the Charge relay system in catalysis. Asn-288 is a glycosylation site (N-linked (GlcNAc...) asparagine). Lys-369 functions as the Charge relay system in the catalytic mechanism. An N-linked (GlcNAc...) asparagine glycan is attached at Asn-375. Residue Asp-445 is the Charge relay system of the active site. Catalysis depends on His-543, which acts as the Proton donor.

The protein belongs to the HMG-CoA reductase family.

It localises to the endoplasmic reticulum membrane. It carries out the reaction (R)-mevalonate + 2 NADP(+) + CoA = (3S)-3-hydroxy-3-methylglutaryl-CoA + 2 NADPH + 2 H(+). Its pathway is metabolic intermediate biosynthesis; (R)-mevalonate biosynthesis; (R)-mevalonate from acetyl-CoA: step 3/3. This transmembrane glycoprotein is involved in the control of cholesterol biosynthesis. It is the rate-limiting enzyme of the sterol biosynthesis. The polypeptide is 3-hydroxy-3-methylglutaryl-coenzyme A reductase 1 (hmgA) (Dictyostelium discoideum (Social amoeba)).